The sequence spans 186 residues: Putative manganese efflux pump MntP (186 aa).

6 helical membrane passes run Met-1 to Ser-21, Val-41 to Val-61, Trp-71 to Gly-91, Leu-105 to Phe-125, Ile-130 to Val-150, and Ile-165 to Trp-185.

This sequence belongs to the MntP (TC 9.B.29) family.

It localises to the cell membrane. Probably functions as a manganese efflux pump. In Methanosarcina barkeri (strain Fusaro / DSM 804), this protein is Putative manganese efflux pump MntP.